A 700-amino-acid polypeptide reads, in one-letter code: Elongation factor G (700 aa).

Residues 10–286 (TKVRNIGIMA…AVVDYLPSPL (277 aa)) enclose the tr-type G domain. GTP-binding positions include 19–26 (AHIDAGKT), 83–87 (DTPGH), and 137–140 (NKMD).

It belongs to the TRAFAC class translation factor GTPase superfamily. Classic translation factor GTPase family. EF-G/EF-2 subfamily.

The protein localises to the cytoplasm. Functionally, catalyzes the GTP-dependent ribosomal translocation step during translation elongation. During this step, the ribosome changes from the pre-translocational (PRE) to the post-translocational (POST) state as the newly formed A-site-bound peptidyl-tRNA and P-site-bound deacylated tRNA move to the P and E sites, respectively. Catalyzes the coordinated movement of the two tRNA molecules, the mRNA and conformational changes in the ribosome. In Saccharopolyspora erythraea (strain ATCC 11635 / DSM 40517 / JCM 4748 / NBRC 13426 / NCIMB 8594 / NRRL 2338), this protein is Elongation factor G.